Reading from the N-terminus, the 524-residue chain is Keratin, type II cytoskeletal 72 (524 aa).

The interval 1–136 is head; it reads MSRQLNLYPG…DPEIQKVRAQ (136 aa). A coil 1A region spans residues 137-172; that stretch reads EREQIKALNNKFASFIDKVRFLEQQNQVLGTKWELL. One can recognise an IF rod domain in the interval 137 to 450; sequence EREQIKALNN…KLLEGEECRM (314 aa). Residues 173 to 191 form a linker 1 region; sequence QQLDLNNCKNNLEPILEGY. Residues 192-283 form a coil 1B region; it reads TSNLRKQLEM…CLYEGEIAQL (92 aa). Residues 284–307 form a linker 12 region; sequence QSHISDTSVILSMDNNRDLDLDSI. The segment at 308-446 is coil 2; sequence IAQVRAQYEE…ATYRKLLEGE (139 aa). Residues 447 to 524 form a tail region; that stretch reads ECRMSGEYPN…SSCATKKASR (78 aa). The tract at residues 495 to 524 is disordered; sequence KTKGSCGGSELKDAPAKTSGSSCATKKASR.

Belongs to the intermediate filament family. Heterotetramer of two type I and two type II keratins.

Has a role in hair formation. Specific component of keratin intermediate filaments in the inner root sheath (IRS) of the hair follicle. In Bos taurus (Bovine), this protein is Keratin, type II cytoskeletal 72 (KRT72).